A 786-amino-acid chain; its full sequence is Keratin, type I cytoskeletal 9 (786 aa).

Residues 1 to 21 (MNCRQFLSSHCSRDSSGGGGG) form a disordered region. Residues 1 to 136 (MNCRQFLSSH…SGAGGILGAD (136 aa)) are head. Serine 52 carries the post-translational modification Phosphoserine. A coil 1A region spans residues 137–172 (EKTTMQDLNSRLASYLDKVQALEDANKELESKIREW). The region spanning 137–449 (EKTTMQDLNS…SLLEGGQEDF (313 aa)) is the IF rod domain. Positions 173-191 (YDKQGSRTFHRDYSPYYDT) are linker 1. Positions 192–283 (IEDLKNQIVN…KNHEDEMSQL (92 aa)) are coil 1B. The segment at 284–306 (TGQNSGDVNVEMNAAPGRDLTKI) is linker 12. The coil 2 stretch occupies residues 307 to 445 (LNDMREEYER…KTYRSLLEGG (139 aa)). A tail region spans residues 446–760 (QEDFESHESG…GGGSGSKGGS (315 aa)). Residues 447–786 (EDFESHESGQ…DDTQGYHIQY (340 aa)) form a disordered region. Composition is skewed to gly residues over residues 460–657 (GSGG…GGSG) and 664–761 (SSSG…GGSG). Positions 762–773 (RSSQVQSSSSKS) are enriched in low complexity.

Belongs to the intermediate filament family. In terms of assembly, heterotetramer of two type I and two type II keratins.

May serve an important special function either in the mature palmar and plantar skin tissue or in the morphogenetic program of the formation of these tissues. Plays a role in keratin filament assembly. This is Keratin, type I cytoskeletal 9 from Canis lupus familiaris (Dog).